Consider the following 54-residue polypeptide: Ribulose bisphosphate carboxylase large chain (54 aa).

The propeptide occupies 1 to 2; that stretch reads MS. An N-acetylproline modification is found at Pro-3. Lys-14 carries the N6,N6,N6-trimethyllysine modification.

The protein belongs to the RuBisCO large chain family. Type I subfamily. As to quaternary structure, heterohexadecamer of 8 large chains and 8 small chains.

It localises to the plastid. The protein resides in the chloroplast. The catalysed reaction is 2 (2R)-3-phosphoglycerate + 2 H(+) = D-ribulose 1,5-bisphosphate + CO2 + H2O. The enzyme catalyses D-ribulose 1,5-bisphosphate + O2 = 2-phosphoglycolate + (2R)-3-phosphoglycerate + 2 H(+). RuBisCO catalyzes two reactions: the carboxylation of D-ribulose 1,5-bisphosphate, the primary event in carbon dioxide fixation, as well as the oxidative fragmentation of the pentose substrate in the photorespiration process. Both reactions occur simultaneously and in competition at the same active site. This chain is Ribulose bisphosphate carboxylase large chain (rbcL), found in Ilex aquifolium (English holly).